The sequence spans 269 residues: Diadenylate cyclase (269 aa).

The region spanning 109 to 266 (RSGIYDLFAN…GGKMILEIDP (158 aa)) is the DAC domain.

Belongs to the adenylate cyclase family. DacZ subfamily. It depends on Mn(2+) as a cofactor.

The enzyme catalyses 2 ATP = 3',3'-c-di-AMP + 2 diphosphate. Diadenylate cyclase that catalyzes the condensation of 2 ATP molecules into cyclic di-AMP (c-di-AMP). c-di-AMP is a second messenger for intracellular signal transduction involved in the control of important regulatory processes such as osmoregulation. Is essential for H.volcanii. Overexpression of DacZ leads to cell death, suggesting the need for tight regulation of c-di-AMP levels. Cannot use GTP as substrate. This Haloferax volcanii (strain ATCC 29605 / DSM 3757 / JCM 8879 / NBRC 14742 / NCIMB 2012 / VKM B-1768 / DS2) (Halobacterium volcanii) protein is Diadenylate cyclase.